A 122-amino-acid chain; its full sequence is Urease subunit beta (122 aa).

This sequence belongs to the urease beta subunit family. Heterotrimer of UreA (gamma), UreB (beta) and UreC (alpha) subunits. Three heterotrimers associate to form the active enzyme.

The protein localises to the cytoplasm. The enzyme catalyses urea + 2 H2O + H(+) = hydrogencarbonate + 2 NH4(+). It functions in the pathway nitrogen metabolism; urea degradation; CO(2) and NH(3) from urea (urease route): step 1/1. In Acetivibrio thermocellus (strain ATCC 27405 / DSM 1237 / JCM 9322 / NBRC 103400 / NCIMB 10682 / NRRL B-4536 / VPI 7372) (Clostridium thermocellum), this protein is Urease subunit beta.